The following is a 717-amino-acid chain: Catalase-peroxidase (717 aa).

Residues 1–20 form a disordered region; the sequence is MSGKCPVMHGGNTSTGTSNK. A compositionally biased stretch (polar residues) spans 11-20; it reads GNTSTGTSNK. A cross-link (tryptophyl-tyrosyl-methioninium (Trp-Tyr) (with M-245)) is located at residues 91–219; it reads WHSAGSYRLA…LAAVQMGLIY (129 aa). Histidine 92 (proton acceptor) is an active-site residue. Residues 219-245 constitute a cross-link (tryptophyl-tyrosyl-methioninium (Tyr-Met) (with W-91)); it reads YVNPEGVNGQPDPQKTAEQVRETFARM. A heme b-binding site is contributed by histidine 260.

This sequence belongs to the peroxidase family. Peroxidase/catalase subfamily. In terms of assembly, homodimer or homotetramer. Requires heme b as cofactor. In terms of processing, formation of the three residue Trp-Tyr-Met cross-link is important for the catalase, but not the peroxidase activity of the enzyme.

The enzyme catalyses H2O2 + AH2 = A + 2 H2O. It carries out the reaction 2 H2O2 = O2 + 2 H2O. In terms of biological role, bifunctional enzyme with both catalase and broad-spectrum peroxidase activity. The polypeptide is Catalase-peroxidase (Chromohalobacter salexigens (strain ATCC BAA-138 / DSM 3043 / CIP 106854 / NCIMB 13768 / 1H11)).